Here is a 262-residue protein sequence, read N- to C-terminus: Trypsin theta (262 aa).

A signal peptide spans 1 to 19; sequence MHGLVVLLVCLAVGSAFAG. A propeptide spans 20–34 (activation peptide); the sequence is TIGVSNADPFEREGR. A Peptidase S1 domain is found at 35–260; that stretch reads IVGGEDTTIR…LRKWILNASQ (226 aa). Cysteines 61 and 77 form a disulfide. Catalysis depends on charge relay system residues histidine 76 and aspartate 121. 2 disulfide bridges follow: cysteine 186-cysteine 203 and cysteine 212-cysteine 236. Serine 216 serves as the catalytic Charge relay system.

Belongs to the peptidase S1 family.

It is found in the secreted. The protein localises to the extracellular space. It carries out the reaction Preferential cleavage: Arg-|-Xaa, Lys-|-Xaa.. The chain is Trypsin theta (thetaTry) from Drosophila erecta (Fruit fly).